A 288-amino-acid polypeptide reads, in one-letter code: Very-long-chain (3R)-3-hydroxyacyl-CoA dehydratase 1 (288 aa).

A disordered region spans residues 1 to 59 (MGRLTEAAAAGGGASAARSAGPPPAPLPLSSTSPGCAAAMASSEEDGTNGGASEASDER). Topologically, residues 1-75 (MGRLTEAAAA…RRLGLLATIW (75 aa)) are cytoplasmic. A helical membrane pass occupies residues 76-95 (LTFYNIAMTAGWLVLAIAMV). The Lumenal segment spans residues 96–114 (RFYMEKGTHKGLYKSIQKT). The chain crosses the membrane as a helical span at residues 115–131 (LKFFQTFALLEIVHCLI). Over 132–141 (GIVPTSVLVA) the chain is Cytoplasmic. Residues 142–159 (GVQVSSRIFMVWLVTHSI) traverse the membrane as a helical segment. At 160-165 (KPIQNE) the chain is on the lumenal side. Residues 166-180 (ESVVLFLVAWTVTEI) traverse the membrane as a helical segment. Residues 181–203 (TRYSFYTFSLLDHLPYFIKWARY) are Cytoplasmic-facing. Residues 204 to 221 (NFFIILYPVGVAGELLTI) traverse the membrane as a helical segment. Catalysis depends on residues Y210 and E217. Topologically, residues 222-251 (YAALPYVKKTGMFSIRLPNKYNVSFDYYYF) are lumenal. N243 is a glycosylation site (N-linked (GlcNAc...) asparagine). The chain crosses the membrane as a helical span at residues 252 to 269 (LLITMASYIPLFPQLYFH). The Cytoplasmic portion of the chain corresponds to 270–288 (MLRQRRKVLHGEVIVEKDD).

The protein belongs to the very long-chain fatty acids dehydratase HACD family. In terms of assembly, may interact with enzymes of the ELO family (including ELOVL1); with those enzymes that mediate condensation, the first of the four steps of the reaction cycle responsible for fatty acids elongation, may be part of a larger fatty acids elongase complex. Interacts with TECR. N-glycosylated. Expressed in heart.

The protein resides in the endoplasmic reticulum membrane. It catalyses the reaction a very-long-chain (3R)-3-hydroxyacyl-CoA = a very-long-chain (2E)-enoyl-CoA + H2O. The enzyme catalyses (3R)-hydroxyhexadecanoyl-CoA = (2E)-hexadecenoyl-CoA + H2O. The catalysed reaction is (3R)-hydroxyoctadecanoyl-CoA = (2E)-octadecenoyl-CoA + H2O. It carries out the reaction (3R)-hydroxyeicosanoyl-CoA = (2E)-eicosenoyl-CoA + H2O. It catalyses the reaction (3R)-hydroxydocosanoyl-CoA = (2E)-docosenoyl-CoA + H2O. The enzyme catalyses (3R)-hydroxytetracosanoyl-CoA = (2E)-tetracosenoyl-CoA + H2O. The catalysed reaction is (3R)-hydroxyhexacosanoyl-CoA = (2E)-hexacosenoyl-CoA + H2O. Its pathway is lipid metabolism; fatty acid biosynthesis. In terms of biological role, catalyzes the third of the four reactions of the long-chain fatty acids elongation cycle. This endoplasmic reticulum-bound enzymatic process, allows the addition of two carbons to the chain of long- and very long-chain fatty acids/VLCFAs per cycle. This enzyme catalyzes the dehydration of the 3-hydroxyacyl-CoA intermediate into trans-2,3-enoyl-CoA, within each cycle of fatty acid elongation. Thereby, it participates in the production of VLCFAs of different chain lengths that are involved in multiple biological processes as precursors of membrane lipids and lipid mediators. In Ovis aries (Sheep), this protein is Very-long-chain (3R)-3-hydroxyacyl-CoA dehydratase 1 (HACD1).